Here is a 78-residue protein sequence, read N- to C-terminus: UPF0349 protein BLi03401/BL03152 (78 aa).

It belongs to the UPF0349 family.

This chain is UPF0349 protein BLi03401/BL03152, found in Bacillus licheniformis (strain ATCC 14580 / DSM 13 / JCM 2505 / CCUG 7422 / NBRC 12200 / NCIMB 9375 / NCTC 10341 / NRRL NRS-1264 / Gibson 46).